The chain runs to 104 residues: Large ribosomal subunit protein uL24 (104 aa).

Belongs to the universal ribosomal protein uL24 family. As to quaternary structure, part of the 50S ribosomal subunit.

Functionally, one of two assembly initiator proteins, it binds directly to the 5'-end of the 23S rRNA, where it nucleates assembly of the 50S subunit. Its function is as follows. One of the proteins that surrounds the polypeptide exit tunnel on the outside of the subunit. This Hydrogenovibrio crunogenus (strain DSM 25203 / XCL-2) (Thiomicrospira crunogena) protein is Large ribosomal subunit protein uL24.